The primary structure comprises 289 residues: Phospholipase A1 (289 aa).

Positions 1 to 20 (MRTLQGWLLPVFMLPMAVYA) are cleaved as a signal peptide. Residues 21–52 (QEATVKEVHDAPAVRGSIIANMLQEHDNPFTL) lie on the Periplasmic side of the membrane. Residues 53 to 65 (YPYDTNYLIYTQT) traverse the membrane as a beta stranded segment. The Extracellular segment spans residues 66–84 (SDLNKEAIASYDWAENARK). Residues 85-99 (DEVKFQLSLAFPLWR) form a beta stranded membrane-spanning segment. Topologically, residues 100–105 (GILGPN) are periplasmic. Residues 106-118 (SVLGASYTQKSWW) traverse the membrane as a beta stranded segment. Residues 119–128 (QLSNSEESSP) are Extracellular-facing. Serine 126 is a Ca(2+) binding site. A beta stranded transmembrane segment spans residues 129-148 (FRETNYEPQLFLGFATDYRF). Topologically, residues 149-150 (AG) are periplasmic. The beta stranded transmembrane segment at 151-164 (WTLRDVEMGYNHDS) threads the bilayer. The active-site Proton acceptor is histidine 162. Serine 164 (nucleophile) is an active-site residue. The Extracellular portion of the chain corresponds to 165 to 173 (NGRSDPTSR). Residues arginine 167 and serine 172 each contribute to the Ca(2+) site. The beta stranded transmembrane segment at 174 to 186 (SWNRLYTRLMAEN) threads the bilayer. Over 187 to 188 (GN) the chain is Periplasmic. A beta stranded membrane pass occupies residues 189-198 (WLVEVKPWYV). Residues 199–216 (VGNTDDNPDITKYMGYYQ) are Extracellular-facing. Aspartate 204 is a Ca(2+) binding site. A beta stranded transmembrane segment spans residues 217 to 223 (LKIGYHL). Over 224-225 (GD) the chain is Periplasmic. The chain crosses the membrane as a beta stranded span at residues 226 to 234 (AVLSAKGQY). The Extracellular segment spans residues 235-241 (NWNTGYG). The chain crosses the membrane as a beta stranded span at residues 242 to 250 (GAELGLSYP). Over 251-255 (ITKHV) the chain is Periplasmic. The chain crosses the membrane as a beta stranded span at residues 256–265 (RLYTQVYSGY). Topologically, residues 266-274 (GESLIDYNF) are extracellular. Residues 275 to 286 (NQTRVGVGVMLN) form a beta stranded membrane-spanning segment. Topologically, residues 287–289 (DLF) are periplasmic.

It belongs to the phospholipase A1 family. Homodimer; dimerization is reversible, and the dimeric form is the active one. Requires Ca(2+) as cofactor.

The protein localises to the cell outer membrane. It carries out the reaction a 1,2-diacyl-sn-glycero-3-phosphocholine + H2O = a 2-acyl-sn-glycero-3-phosphocholine + a fatty acid + H(+). The catalysed reaction is a 1,2-diacyl-sn-glycero-3-phosphocholine + H2O = a 1-acyl-sn-glycero-3-phosphocholine + a fatty acid + H(+). In terms of biological role, hydrolysis of phosphatidylcholine with phospholipase A2 (EC 3.1.1.4) and phospholipase A1 (EC 3.1.1.32) activities. The polypeptide is Phospholipase A1 (pldA) (Escherichia coli O157:H7).